A 492-amino-acid chain; its full sequence is Ribose import ATP-binding protein RbsA (492 aa).

2 ABC transporter domains span residues 3 to 239 (IDMR…VGRK) and 238 to 492 (RKLE…TGGK). 35 to 42 (GENGAGKS) provides a ligand contact to ATP.

Belongs to the ABC transporter superfamily. Ribose importer (TC 3.A.1.2.1) family. In terms of assembly, the complex is composed of an ATP-binding protein (RbsA), two transmembrane proteins (RbsC) and a solute-binding protein (RbsB).

The protein localises to the cell membrane. The enzyme catalyses D-ribose(out) + ATP + H2O = D-ribose(in) + ADP + phosphate + H(+). Functionally, part of the ABC transporter complex RbsABC involved in ribose import. Responsible for energy coupling to the transport system. The protein is Ribose import ATP-binding protein RbsA of Streptococcus agalactiae serotype III (strain NEM316).